The sequence spans 767 residues: Polyketide biosynthesis protein PksE (767 aa).

The tract at residues 1-312 (MITYVFPGQG…QRNVQAGITA (312 aa)) is acyl transferase. Active-site residues include S87 and H193.

The protein in the N-terminal section; belongs to the FabD family.

It localises to the cytoplasm. The enzyme catalyses holo-[ACP] + malonyl-CoA = malonyl-[ACP] + CoA. It functions in the pathway antibiotic biosynthesis; bacillaene biosynthesis. Its function is as follows. Probably involved in some intermediate steps for the synthesis of the antibiotic polyketide bacillaene which is involved in secondary metabolism. Probably has an acyl transferase activity and could also have a flavin mononucleotide-dependent oxidoreductase activity. This is Polyketide biosynthesis protein PksE (pksE) from Bacillus subtilis (strain 168).